Reading from the N-terminus, the 280-residue chain is uncharacterized protein (280 aa).

Helical transmembrane passes span 3-23 (ILITALEQSLIMLPLILGMYI), 52-72 (FGLFHALIFAIIAGGINGSIV), 81-101 (INGLIAGILANFMLYSVNLQI), 123-143 (NWLVPLILINSFIIVIVLILL), 196-216 (FADINMGYGVALVGIGAIIIG), and 233-253 (IFACFIGILFYFISLSILLHI).

It localises to the cell membrane. This is an uncharacterized protein from Rickettsia prowazekii (strain Madrid E).